Reading from the N-terminus, the 258-residue chain is Global transcriptional regulator CodY (258 aa).

The GAF domain stretch occupies residues 1–156 (MSTLLSKTRR…SATIVGMELL (156 aa)). The segment at residues 204–223 (ASKIADKVGITRSVIVNALR) is a DNA-binding region (H-T-H motif).

This sequence belongs to the CodY family.

The protein resides in the cytoplasm. Its function is as follows. DNA-binding global transcriptional regulator which is involved in the adaptive response to starvation and acts by directly or indirectly controlling the expression of numerous genes in response to nutrient availability. During rapid exponential growth, CodY is highly active and represses genes whose products allow adaptation to nutrient depletion. The chain is Global transcriptional regulator CodY from Clostridium perfringens (strain SM101 / Type A).